The following is a 72-amino-acid chain: Translation initiation factor IF-1 (72 aa).

In terms of domain architecture, S1-like spans 1 to 72 (MIKEDNIEMH…SKGRIIFRSR (72 aa)).

The protein belongs to the IF-1 family. As to quaternary structure, component of the 30S ribosomal translation pre-initiation complex which assembles on the 30S ribosome in the order IF-2 and IF-3, IF-1 and N-formylmethionyl-tRNA(fMet); mRNA recruitment can occur at any time during PIC assembly.

The protein resides in the cytoplasm. Functionally, one of the essential components for the initiation of protein synthesis. Stabilizes the binding of IF-2 and IF-3 on the 30S subunit to which N-formylmethionyl-tRNA(fMet) subsequently binds. Helps modulate mRNA selection, yielding the 30S pre-initiation complex (PIC). Upon addition of the 50S ribosomal subunit IF-1, IF-2 and IF-3 are released leaving the mature 70S translation initiation complex. The protein is Translation initiation factor IF-1 of Blochmanniella floridana.